The sequence spans 394 residues: Na(+)/H(+) antiporter NhaA (394 aa).

11 consecutive transmembrane segments (helical) span residues 24–44 (AGLV…SPLA), 58–78 (LSVQ…LVGL), 96–116 (TLPG…YVML), 126–146 (GWAI…SLLG), 155–175 (IFLA…IAIF), 180–200 (INVA…SLCA), 214–234 (AVLW…GVLL), 267–287 (VAFA…FASI), 300–320 (VAAG…ALMV), 336–356 (VLGV…IGLL), and 370–390 (GILA…RIAG).

It belongs to the NhaA Na(+)/H(+) (TC 2.A.33) antiporter family.

It localises to the cell inner membrane. It carries out the reaction Na(+)(in) + 2 H(+)(out) = Na(+)(out) + 2 H(+)(in). Functionally, na(+)/H(+) antiporter that extrudes sodium in exchange for external protons. This Azorhizobium caulinodans (strain ATCC 43989 / DSM 5975 / JCM 20966 / LMG 6465 / NBRC 14845 / NCIMB 13405 / ORS 571) protein is Na(+)/H(+) antiporter NhaA.